Reading from the N-terminus, the 379-residue chain is Glutamate 5-kinase (379 aa).

Residue Lys15 coordinates ATP. Residues Ser54, Asp144, and Asn156 each coordinate substrate. 176–177 (TD) lines the ATP pocket. Positions 282-360 (KGVILVDAGA…GEIERALGYK (79 aa)) constitute a PUA domain.

Belongs to the glutamate 5-kinase family.

The protein resides in the cytoplasm. The catalysed reaction is L-glutamate + ATP = L-glutamyl 5-phosphate + ADP. It participates in amino-acid biosynthesis; L-proline biosynthesis; L-glutamate 5-semialdehyde from L-glutamate: step 1/2. Catalyzes the transfer of a phosphate group to glutamate to form L-glutamate 5-phosphate. In Anaeromyxobacter dehalogenans (strain 2CP-C), this protein is Glutamate 5-kinase.